Here is a 686-residue protein sequence, read N- to C-terminus: Methionine--tRNA ligase (686 aa).

A 'HIGH' region motif is present at residues 15-25 (PYANGSIHLGH). Cys146, Cys149, Cys159, and Cys162 together coordinate Zn(2+). Residues 332-336 (KMSKS) carry the 'KMSKS' region motif. Lys335 is a binding site for ATP. A tRNA-binding domain is found at 585–686 (AFAAVDMRIA…EGAQPGMRVM (102 aa)).

This sequence belongs to the class-I aminoacyl-tRNA synthetase family. MetG type 1 subfamily. As to quaternary structure, homodimer. Zn(2+) is required as a cofactor.

The protein resides in the cytoplasm. It carries out the reaction tRNA(Met) + L-methionine + ATP = L-methionyl-tRNA(Met) + AMP + diphosphate. Is required not only for elongation of protein synthesis but also for the initiation of all mRNA translation through initiator tRNA(fMet) aminoacylation. The protein is Methionine--tRNA ligase of Vibrio campbellii (strain ATCC BAA-1116).